The following is a 407-amino-acid chain: Bifunctional enzyme IspD/IspF (407 aa).

The tract at residues 1-246 (MTEASENASA…SSERTHFPDI (246 aa)) is 2-C-methyl-D-erythritol 4-phosphate cytidylyltransferase. The segment at 247–407 (RTGNGYDVHA…SVVFPGEVPE (161 aa)) is 2-C-methyl-D-erythritol 2,4-cyclodiphosphate synthase. A divalent metal cation is bound by residues Asp-253 and His-255. 4-CDP-2-C-methyl-D-erythritol 2-phosphate contacts are provided by residues 253–255 (DVH) and 279–280 (HS). His-287 is a binding site for a divalent metal cation. 4-CDP-2-C-methyl-D-erythritol 2-phosphate contacts are provided by residues 301–303 (DIG), 377–380 (TTNE), Phe-384, and Arg-387.

This sequence in the N-terminal section; belongs to the IspD/TarI cytidylyltransferase family. IspD subfamily. It in the C-terminal section; belongs to the IspF family. The cofactor is a divalent metal cation.

The catalysed reaction is 2-C-methyl-D-erythritol 4-phosphate + CTP + H(+) = 4-CDP-2-C-methyl-D-erythritol + diphosphate. It carries out the reaction 4-CDP-2-C-methyl-D-erythritol 2-phosphate = 2-C-methyl-D-erythritol 2,4-cyclic diphosphate + CMP. The protein operates within isoprenoid biosynthesis; isopentenyl diphosphate biosynthesis via DXP pathway; isopentenyl diphosphate from 1-deoxy-D-xylulose 5-phosphate: step 2/6. Its pathway is isoprenoid biosynthesis; isopentenyl diphosphate biosynthesis via DXP pathway; isopentenyl diphosphate from 1-deoxy-D-xylulose 5-phosphate: step 4/6. Its function is as follows. Bifunctional enzyme that catalyzes the formation of 4-diphosphocytidyl-2-C-methyl-D-erythritol from CTP and 2-C-methyl-D-erythritol 4-phosphate (MEP) (IspD), and catalyzes the conversion of 4-diphosphocytidyl-2-C-methyl-D-erythritol 2-phosphate (CDP-ME2P) to 2-C-methyl-D-erythritol 2,4-cyclodiphosphate (ME-CPP) with a corresponding release of cytidine 5-monophosphate (CMP) (IspF). The sequence is that of Bifunctional enzyme IspD/IspF from Mesorhizobium japonicum (strain LMG 29417 / CECT 9101 / MAFF 303099) (Mesorhizobium loti (strain MAFF 303099)).